A 670-amino-acid chain; its full sequence is Acetyl-coenzyme A synthetase (670 aa).

Residues 205–208 (RRGK) and threonine 326 each bind CoA. Residues 402 to 404 (GEP), 426 to 431 (STWWMT), aspartate 517, arginine 532, and arginine 543 contribute to the ATP site. Positions 554, 556, and 559 each coordinate Mg(2+). Arginine 601 serves as a coordination point for CoA. The residue at position 626 (lysine 626) is an N6-acetyllysine.

It belongs to the ATP-dependent AMP-binding enzyme family. It depends on Mg(2+) as a cofactor. Post-translationally, acetylated. Deacetylation by the SIR2-homolog deacetylase activates the enzyme.

It catalyses the reaction acetate + ATP + CoA = acetyl-CoA + AMP + diphosphate. Functionally, catalyzes the conversion of acetate into acetyl-CoA (AcCoA), an essential intermediate at the junction of anabolic and catabolic pathways. AcsA undergoes a two-step reaction. In the first half reaction, AcsA combines acetate with ATP to form acetyl-adenylate (AcAMP) intermediate. In the second half reaction, it can then transfer the acetyl group from AcAMP to the sulfhydryl group of CoA, forming the product AcCoA. This chain is Acetyl-coenzyme A synthetase, found in Pyrobaculum arsenaticum (strain DSM 13514 / JCM 11321 / PZ6).